The primary structure comprises 400 residues: Tryptophan synthase beta chain (400 aa).

At Lys-92 the chain carries N6-(pyridoxal phosphate)lysine.

The protein belongs to the TrpB family. In terms of assembly, tetramer of two alpha and two beta chains. Requires pyridoxal 5'-phosphate as cofactor.

It carries out the reaction (1S,2R)-1-C-(indol-3-yl)glycerol 3-phosphate + L-serine = D-glyceraldehyde 3-phosphate + L-tryptophan + H2O. It functions in the pathway amino-acid biosynthesis; L-tryptophan biosynthesis; L-tryptophan from chorismate: step 5/5. Its function is as follows. The beta subunit is responsible for the synthesis of L-tryptophan from indole and L-serine. This Chromobacterium violaceum (strain ATCC 12472 / DSM 30191 / JCM 1249 / CCUG 213 / NBRC 12614 / NCIMB 9131 / NCTC 9757 / MK) protein is Tryptophan synthase beta chain.